The chain runs to 264 residues: uncharacterized protein (264 aa).

A signal peptide spans 1-23 (MQQWNLTISNILIGLFFCFSAQA).

This is an uncharacterized protein from Shewanella oneidensis (strain ATCC 700550 / JCM 31522 / CIP 106686 / LMG 19005 / NCIMB 14063 / MR-1).